A 175-amino-acid polypeptide reads, in one-letter code: MMHLKNIKSENPKTKEQYQLTKNFDVIWLWSEDGKNWYEEVNNFQDDTIKIVYDENNIIVAITKDASTLNPEGFSVVEIPDITANRRADDSGKWMFKDGAVVKRIYTADEQQQQAESQKAALLSEAESVIQPLERAVRLNMATDEERARLESWERYSVLVSRVDTANPEWPQKPE.

It belongs to the tfa family.

It localises to the virion. The protein resides in the host cytoplasm. Chaperone involved in tail fiber assembly. Remains associated to the tail fiber and participates in the host receptor binding. Binds to the primary receptor. Two alternate tail fiber assembly proteins U and U' are encoded extending the host range of the virus. The protein is Tail fiber assembly protein U (U) of Enterobacteriaceae (Bacteriophage Mu).